The sequence spans 1255 residues: MGVDPFKTTETLEADKETNGGVPVKDKLTFKAPERKSRLGLDARAIEKKDNAKTEGEFKVPKKSAISVTSSLDEEDKSDVSGLDFGTENTRPVHSSRRYREKSSRSQSAQESTVTTENAGTSDISITPRTLSCTSSYERGGSNRHREEHRRDRSETPRSRQRNTYDEMDHYRRRESYRQSDRDYHGEKRRRYNSDWRTPGRSDWDDGQDEWERSPHGDRGSSYSRRPQPSPSPMLAAASPDARLASPWLDTPRSTMSSASPWDMGAPSPIPIRASGSSIRSSSSRYGGRSNQLAYSREGDLTNEGHSDEDRSQGAEEFKHEITETMRVEMEYQSDRAWYDTDEGNSLFDADSASFFLGDDASLQKKETELAKRLVRRDGSKMSLAQSKKYSQLNADNAQWEDRQLLRSGAVRGTEVQTEFDSEEERKAILLVHDTKPPFLDGRVVYTKQAEPVMPVKDPTSDMAIISRKGSGLVKEIREKQSANKSRQRFWELAGSNLGNILGIEKSAEQIDADTAVVGDDGEVDFKGEAKFAQHMKKGEAVSEFAMSKTMAEQRQYLPIFSVRDELLQVIRENQVIVVVGETGSGKTTQLTQYLHEDGYTINGIVGCTQPRRVAAMSVAKRVSEEMETELGDKIGYAIRFEDVTGPNTVIKYMTDGVLLRETLKDSDLDKYRVVVMDEAHERSLNTDVLFGILKKVVARRRDFKLIVTSATLNAQKFSNFFGSVPIFNIPGRTFPVNILYSKTPCEDYVEAAVKQAMTIHITSPPGDILIFMTGQDEIEAACFSLKERMEQLVSSSSREITNLLILPIYSQLPADLQAKIFQKPEDGARKCIVATNIAETSLTVDGIYYVIDTGYGKMKVFNPRMGMDALQVFPISRAASDQRAGRAGRTGPGTCYRLYTESAYLNEMLPSPVPEIQRTNLGNVVLLLKSLKIDNLLDFDFMDPPPQENILNSMYQLWVLGALNNVGGLTDLGWKMVEFPLDPPLAKMLLMGERLDCIDEVLTIVSMLSVPSVFFRPKERAEESDAAREKFFVPESDHLTLLNVYQQWKEHDYRGDWCNDHYLQVKGLRKAREVRSQLLDILKQLKIELRSCGPDWDIVRKAICSAYFHNSARLKGVGEYVNCRTGMPCHLHPSSALYGLGYTPDYVVYHELILTTKEYMQCATSVEPHWLAELGPMFFSVKDSDTSMLEHKKKQKEEKSGMEEEMEKLRRDQVESELRSKERERKKRAKQQQQISGPGLKKGTTFLRPKKLGL.

Residues 1–316 are disordered; that stretch reads MGVDPFKTTE…SDEDRSQGAE (316 aa). The segment covering 13-60 has biased composition (basic and acidic residues); sequence EADKETNGGVPVKDKLTFKAPERKSRLGLDARAIEKKDNAKTEGEFKV. Positions 109 to 137 are enriched in polar residues; it reads AQESTVTTENAGTSDISITPRTLSCTSSY. 2 short sequence motifs (nuclear localization signal) span residues 144–153 and 172–191; these read RHREEHRRDR and RRRE…KRRR. Over residues 144-219 the composition is skewed to basic and acidic residues; sequence RHREEHRRDR…EWERSPHGDR (76 aa). Composition is skewed to low complexity over residues 220 to 240 and 271 to 290; these read GSSY…AASP and PIRA…GGRS. A compositionally biased stretch (basic and acidic residues) spans 297–316; it reads REGDLTNEGHSDEDRSQGAE. A Helicase ATP-binding domain is found at 568–731; that stretch reads LQVIRENQVI…FGSVPIFNIP (164 aa). 581–588 lines the ATP pocket; sequence GETGSGKT. The DEAH box signature appears at 678–681; that stretch reads DEAH. In terms of domain architecture, Helicase C-terminal spans 753–933; it reads AVKQAMTIHI…NVVLLLKSLK (181 aa). Positions 1190-1224 are enriched in basic and acidic residues; the sequence is LEHKKKQKEEKSGMEEEMEKLRRDQVESELRSKER. Residues 1190–1255 are disordered; sequence LEHKKKQKEE…TFLRPKKLGL (66 aa).

The protein belongs to the DEAD box helicase family. DEAH subfamily. PRP16 sub-subfamily. As to quaternary structure, interacts with the Phytophthora PSR1 protein.

It is found in the nucleus. It catalyses the reaction ATP + H2O = ADP + phosphate + H(+). Its function is as follows. Involved in pre-mRNA splicing by mediating structural transitions of the spliceosome during the catalytic step. Facilitates expression of genes involved in auxin-mediated development including male-gametophyte transmission, apical-basal patterning of embryonic and gynoecium development, stamen development, phyllotactic flower positioning, and vascular development. Also involved in root-meristem maintenance and planar polarity of root-hair positioning. Acts as a component of RNA silencing that regulates distinct classes of endogenous small RNAs. Functions as a positive regulator of plant immunity. This is Pre-mRNA-splicing factor ATP-dependent RNA helicase DEAH7 from Arabidopsis thaliana (Mouse-ear cress).